The following is a 192-amino-acid chain: Putative manganese efflux pump MntP (192 aa).

6 consecutive transmembrane segments (helical) span residues 2-22, 41-61, 62-82, 109-129, 136-156, and 172-192; these read IAII…AFAV, SALW…YAAS, AFSA…LAFI, MLPL…SLAF, FAIL…LYIG, and GVVL…VIAF.

The protein belongs to the MntP (TC 9.B.29) family.

Its subcellular location is the cell membrane. Its function is as follows. Probably functions as a manganese efflux pump. This Bifidobacterium longum subsp. infantis (strain ATCC 15697 / DSM 20088 / JCM 1222 / NCTC 11817 / S12) protein is Putative manganese efflux pump MntP.